Consider the following 308-residue polypeptide: Flavonol synthase 3 (308 aa).

A Fe2OG dioxygenase domain is found at 167–267 (TIEYLMKINY…RISWPVFVES (101 aa)). 175–177 (NYY) contacts 2-oxoglutarate. Residues His-192, Asp-194, and His-248 each coordinate Fe cation. 258–260 (RIS) is a binding site for 2-oxoglutarate.

The protein belongs to the iron/ascorbate-dependent oxidoreductase family. The cofactor is Fe(2+). In terms of tissue distribution, widely expressed at low levels.

It carries out the reaction a (2R,3R)-dihydroflavonol + 2-oxoglutarate + O2 = a flavonol + succinate + CO2 + H2O. It participates in secondary metabolite biosynthesis; flavonoid biosynthesis. Functionally, catalyzes the formation of flavonols from dihydroflavonols. Possesses low activity in vitro towards dihydrokaempferol and dihydroquercetin producing kaempferol and quercitin, respectively. The polypeptide is Flavonol synthase 3 (Arabidopsis thaliana (Mouse-ear cress)).